A 743-amino-acid polypeptide reads, in one-letter code: Polyribonucleotide nucleotidyltransferase (743 aa).

Mg(2+) contacts are provided by D489 and D495. Positions P556–I618 constitute a KH domain. Residues G628 to K698 enclose the S1 motif domain. The disordered stretch occupies residues P704–G743.

Belongs to the polyribonucleotide nucleotidyltransferase family. Mg(2+) serves as cofactor.

The protein resides in the cytoplasm. The enzyme catalyses RNA(n+1) + phosphate = RNA(n) + a ribonucleoside 5'-diphosphate. In terms of biological role, involved in mRNA degradation. Catalyzes the phosphorolysis of single-stranded polyribonucleotides processively in the 3'- to 5'-direction. This Porphyromonas gingivalis (strain ATCC BAA-308 / W83) protein is Polyribonucleotide nucleotidyltransferase.